Consider the following 40-residue polypeptide: Subtilisin-like serine protease AS-E1 (40 aa).

Positions 4–40 constitute a Peptidase S8 domain; that stretch reads PWGLARISHRTTGATSYVYDDSAGEGTCSYIIDTGIY. The Charge relay system role is filled by Asp-36.

It belongs to the peptidase S8 family. As to quaternary structure, homodimer.

Its activity is regulated as follows. Strongly inhibited by antipain and PMSF. Inhibited by benzamidine and aprotinin by 80% and 17% respectively. Little or no inhibition by EDTA, E-64, iodoacetic acid, leupeptin and FUT-175. In terms of biological role, subtilisin-like serine protease. Cleaves prothrombin at 155-Arg-|-Ser-156, 45-Thr-|-Ala-46 and 316-Tyr-|-Ile-317 to produce meizothrombin(desF1)-like molecules. Degrades fibrinogen. Inhibits plasma coagulation. In Acremonium sp, this protein is Subtilisin-like serine protease AS-E1.